The chain runs to 71 residues: Stathmin-1-B (71 aa).

The stretch at 1–67 (KREHEKEVLQ…EIRKGKECKE (67 aa)) forms a coiled coil. In terms of domain architecture, SLD spans 1-71 (KREHEKEVLQ…GKECKEPSED (71 aa)).

The protein belongs to the stathmin family. As to quaternary structure, binds to two alpha/beta-tubulin heterodimers. In terms of processing, from unphosphorylated forms to highly phosphorylated ones in the mature egg, followed by progressive dephosphorylation from the mid-blastula to the tailbud stage. Ubiquitous. Mostly abundant in brain and oocytes.

It localises to the cytoplasm. It is found in the cytoskeleton. Involved in the regulation of the microtubule (MT) filament system by destabilizing microtubules. It prevents assembly and promotes disassembly of microtubules. This Xenopus laevis (African clawed frog) protein is Stathmin-1-B (stmn1-b).